We begin with the raw amino-acid sequence, 517 residues long: ATP synthase subunit alpha (517 aa).

174 to 181 (GDRQTGKT) lines the ATP pocket.

Belongs to the ATPase alpha/beta chains family. F-type ATPases have 2 components, CF(1) - the catalytic core - and CF(0) - the membrane proton channel. CF(1) has five subunits: alpha(3), beta(3), gamma(1), delta(1), epsilon(1). CF(0) has three main subunits: a(1), b(2) and c(9-12). The alpha and beta chains form an alternating ring which encloses part of the gamma chain. CF(1) is attached to CF(0) by a central stalk formed by the gamma and epsilon chains, while a peripheral stalk is formed by the delta and b chains.

The protein localises to the cell inner membrane. It carries out the reaction ATP + H2O + 4 H(+)(in) = ADP + phosphate + 5 H(+)(out). Functionally, produces ATP from ADP in the presence of a proton gradient across the membrane. The alpha chain is a regulatory subunit. The protein is ATP synthase subunit alpha of Variovorax paradoxus (strain S110).